The following is a 308-amino-acid chain: Carbamate kinase (308 aa).

It belongs to the carbamate kinase family.

Its subcellular location is the cytoplasm. It catalyses the reaction hydrogencarbonate + NH4(+) + ATP = carbamoyl phosphate + ADP + H2O + H(+). This is Carbamate kinase from Synechocystis sp. (strain ATCC 27184 / PCC 6803 / Kazusa).